Consider the following 277-residue polypeptide: Reaction center protein L chain (277 aa).

3 helical membrane passes run 30–52, 84–106, and 113–135; these read FYVG…LIAW, GGIW…LREV, and GIGF…LVVI. Positions 154 and 174 each coordinate (7R,8Z)-bacteriochlorophyll b. Residues 173-195 form a helical membrane-spanning segment; sequence AHMIAITFFFTTCLALALHGGLV. Residue H191 coordinates Fe cation. A ubiquinone is bound at residue F217. H231 provides a ligand contact to Fe cation. Residues 233-255 traverse the membrane as a helical segment; that stretch reads LGLFLALSAVFFSAVCMIISGPV.

It belongs to the reaction center PufL/M/PsbA/D family. In terms of assembly, reaction center is composed of four bacteriochlorophylls, two bacteriopheophytins, two ubiquinones, one iron, and three highly hydrophobic polypeptide chains (designated L, M, and H).

The protein localises to the cellular chromatophore membrane. Its function is as follows. The reaction center is a membrane-bound complex that mediates the initial photochemical event in the electron transfer process of photosynthesis. This chain is Reaction center protein L chain (pufL), found in Rhodopseudomonas palustris (strain ATCC BAA-98 / CGA009).